A 101-amino-acid chain; its full sequence is MAKTSAVEKNNRRRKMADRYANKRAALKAIVMDQGKPMEERFKAQLQLAALPRNSSKTRIRNRCEVTGRPRAFYRKLKMSRIALRELGSQGLIPGLVKSSW.

The protein belongs to the universal ribosomal protein uS14 family. In terms of assembly, part of the 30S ribosomal subunit. Contacts proteins S3 and S10.

Binds 16S rRNA, required for the assembly of 30S particles and may also be responsible for determining the conformation of the 16S rRNA at the A site. The chain is Small ribosomal subunit protein uS14 from Chelativorans sp. (strain BNC1).